Here is a 357-residue protein sequence, read N- to C-terminus: DNA replication and repair protein RecF (357 aa).

Gly30–Thr37 is a binding site for ATP.

This sequence belongs to the RecF family.

The protein localises to the cytoplasm. Its function is as follows. The RecF protein is involved in DNA metabolism; it is required for DNA replication and normal SOS inducibility. RecF binds preferentially to single-stranded, linear DNA. It also seems to bind ATP. The protein is DNA replication and repair protein RecF of Shigella flexneri serotype 5b (strain 8401).